The sequence spans 242 residues: N-alpha-acetyltransferase 60 (242 aa).

Residues 1-192 are Cytoplasmic-facing; the sequence is MTEVVPSSAL…GGHPPWTILD (192 aa). One can recognise an N-acetyltransferase domain in the interval 13 to 182; sequence VSLRLLCHDD…DGFTYVLYIN (170 aa). Tyr-38 provides a ligand contact to substrate. Lys-79 bears the N6-acetyllysine; by autocatalysis mark. Tyr-97 is a catalytic residue. Leu-99 provides a ligand contact to substrate. Position 101–103 (101–103) interacts with acetyl-CoA; that stretch reads LGV. Residues Lys-105, Lys-109, and Lys-121 each carry the N6-acetyllysine; by autocatalysis modification. 109–114 contributes to the acetyl-CoA binding site; it reads KHGIGS. The active site involves His-138. Acetyl-CoA contacts are provided by residues Asn-143 and 150 to 153; that span reads YENR. Positions 162–173 are required for homodimerization; it reads PYYYSIRGVLKD. Tyr-165 contacts substrate. The segment at residues 193-236 is an intramembrane region (helical); the sequence is YIQHLGSALANLSPCSIPHRIYRQAHSLLCSFLPWSSISSKGGI. The Cytoplasmic portion of the chain corresponds to 237 to 242; sequence EYSRTM.

It belongs to the acetyltransferase family. NAA60 subfamily. In terms of assembly, monomer and homodimer; monomer in presence of substrate and homodimer in its absence. In terms of processing, acetylated: autoacetylation is required for optimal acetyltransferase activity.

It localises to the golgi apparatus membrane. It carries out the reaction N-terminal L-methionyl-[transmembrane protein] + acetyl-CoA = N-terminal N(alpha)-acetyl-L-methionyl-[transmembrane protein] + CoA + H(+). It catalyses the reaction L-lysyl-[protein] + acetyl-CoA = N(6)-acetyl-L-lysyl-[protein] + CoA + H(+). Its function is as follows. N-alpha-acetyltransferase that specifically mediates the acetylation of N-terminal residues of the transmembrane proteins, with a strong preference for N-termini facing the cytosol. Displays N-terminal acetyltransferase activity towards a range of N-terminal sequences including those starting with Met-Lys, Met-Val, Met-Ala and Met-Met. Required for normal chromosomal segregation during anaphase. May also show histone acetyltransferase activity; such results are however unclear in vivo and would require additional experimental evidences. In Rattus norvegicus (Rat), this protein is N-alpha-acetyltransferase 60 (Naa60).